The sequence spans 341 residues: Uroporphyrinogen decarboxylase (341 aa).

Substrate contacts are provided by residues 26–30 (RQAGR), aspartate 75, tyrosine 150, serine 205, and histidine 318.

The protein belongs to the uroporphyrinogen decarboxylase family. Homodimer.

Its subcellular location is the cytoplasm. The enzyme catalyses uroporphyrinogen III + 4 H(+) = coproporphyrinogen III + 4 CO2. The protein operates within porphyrin-containing compound metabolism; protoporphyrin-IX biosynthesis; coproporphyrinogen-III from 5-aminolevulinate: step 4/4. Catalyzes the decarboxylation of four acetate groups of uroporphyrinogen-III to yield coproporphyrinogen-III. This Thermus thermophilus (strain ATCC BAA-163 / DSM 7039 / HB27) protein is Uroporphyrinogen decarboxylase.